We begin with the raw amino-acid sequence, 124 residues long: MPTINQLIKSERTVQKNQTKSPALDSCPQRRGVCTRVYTTTPKKPNSALRKVAKVRLSNGFEVISYIPGIGHNLQEHSVVLIRGGRVKDLPGVRYHIVRGVLDLQGVNGRLRARSKYGTKRPKK.

A disordered region spans residues 9–28 (KSERTVQKNQTKSPALDSCP). Aspartate 89 carries the post-translational modification 3-methylthioaspartic acid.

The protein belongs to the universal ribosomal protein uS12 family. Part of the 30S ribosomal subunit. Contacts proteins S8 and S17. May interact with IF1 in the 30S initiation complex.

Functionally, with S4 and S5 plays an important role in translational accuracy. Interacts with and stabilizes bases of the 16S rRNA that are involved in tRNA selection in the A site and with the mRNA backbone. Located at the interface of the 30S and 50S subunits, it traverses the body of the 30S subunit contacting proteins on the other side and probably holding the rRNA structure together. The combined cluster of proteins S8, S12 and S17 appears to hold together the shoulder and platform of the 30S subunit. The polypeptide is Small ribosomal subunit protein uS12 (Bdellovibrio bacteriovorus (strain ATCC 15356 / DSM 50701 / NCIMB 9529 / HD100)).